The chain runs to 157 residues: Transcription initiation factor IIA large subunit (157 aa).

This sequence belongs to the TFIIA subunit 1 family. TFIIA is a heterodimer of the large subunit and the small subunit gamma.

The protein localises to the nucleus. Its function is as follows. TFIIA is a component of the transcription machinery of RNA polymerase II and plays an important role in transcriptional activation. This Encephalitozoon cuniculi (strain GB-M1) (Microsporidian parasite) protein is Transcription initiation factor IIA large subunit (TOA1).